We begin with the raw amino-acid sequence, 1286 residues long: Ankyrin-repeat and fibronectin type III domain-containing 1 (1286 aa).

ANK repeat units follow at residues 274–303 (QGNE…PEEL) and 311–340 (EGLT…RESP). The region spanning 411–507 (VPANACLMVS…TTTPVCASPS (97 aa)) is the Fibronectin type-III domain. Residues 748–755 (GLYLGYLK) are highly conserved peptide sequence. Positions 999–1011 (SSHIDCLPSTSPS) are enriched in polar residues. Disordered regions lie at residues 999 to 1032 (SSHI…EEGC), 1086 to 1106 (KASM…DTDH), 1187 to 1207 (AEDP…RGLP), and 1242 to 1286 (AGQD…SSML). Residues 1260–1277 (SSLPSSTSSEMSPDPTSP) show a composition bias toward low complexity.

As to expression, expressed in both the suprachiasmatic nucleus and dorsal medial hypothalamus.

In terms of biological role, may play a role in neuronal function. The sequence is that of Ankyrin-repeat and fibronectin type III domain-containing 1 from Mus musculus (Mouse).